A 259-amino-acid chain; its full sequence is Small ribosomal subunit protein uS2 (259 aa).

The disordered stretch occupies residues 228–259 (VSFGSEEAEENNQKEDNEEIFEIEDVDESEEM). Residues 233 to 259 (EEAEENNQKEDNEEIFEIEDVDESEEM) show a composition bias toward acidic residues.

Belongs to the universal ribosomal protein uS2 family.

The sequence is that of Small ribosomal subunit protein uS2 from Thermosipho africanus (strain TCF52B).